Consider the following 212-residue polypeptide: MSASDRDRVLAAAAVSRETAAALDLYVAQLARWQTVKNLVGPSTLPEVWTRHIADSLQLLDAAPGATRWLDLGSGAGIPGLILAIAGREARPQMQVDLVESNARKGAFLQETARLTGASARIHVSRIESVIGRFTGVEVVCARALAPLPQLLAWTAPLLKSGTIGLFPKGREAQSELTAARETWTFEADVIPSRTDSSAGIVRISSLSGQLP.

S-adenosyl-L-methionine contacts are provided by residues G73, 127–128 (IE), and R143.

It belongs to the methyltransferase superfamily. RNA methyltransferase RsmG family.

Its subcellular location is the cytoplasm. It catalyses the reaction guanosine(527) in 16S rRNA + S-adenosyl-L-methionine = N(7)-methylguanosine(527) in 16S rRNA + S-adenosyl-L-homocysteine. Functionally, specifically methylates the N7 position of guanine in position 527 of 16S rRNA. The polypeptide is Ribosomal RNA small subunit methyltransferase G (Methylobacterium nodulans (strain LMG 21967 / CNCM I-2342 / ORS 2060)).